The sequence spans 201 residues: Glutathione peroxidase 1 (201 aa).

Phosphoserine is present on Ser32. Residue Sec47 is part of the active site. Residue Sec47 is a non-standard amino acid, selenocysteine. An N6-acetyllysine; alternate mark is found at Lys86, Lys112, and Lys146. N6-succinyllysine; alternate is present on residues Lys86, Lys112, and Lys146. Phosphoserine occurs at positions 195 and 199.

The protein belongs to the glutathione peroxidase family. In terms of assembly, homotetramer. Interacts with MIEN1. Post-translationally, during periods of oxidative stress, Sec-47 may react with a superoxide radical, irreversibly lose hydroselenide and be converted to dehydroalanine.

It localises to the cytoplasm. Its subcellular location is the mitochondrion. It catalyses the reaction 2 glutathione + H2O2 = glutathione disulfide + 2 H2O. The enzyme catalyses a hydroperoxy polyunsaturated fatty acid + 2 glutathione = a hydroxy polyunsaturated fatty acid + glutathione disulfide + H2O. It carries out the reaction tert-butyl hydroperoxide + 2 glutathione = tert-butanol + glutathione disulfide + H2O. The catalysed reaction is cumene hydroperoxide + 2 glutathione = 2-phenylpropan-2-ol + glutathione disulfide + H2O. It catalyses the reaction (13S)-hydroperoxy-(9Z,11E)-octadecadienoate + 2 glutathione = (13S)-hydroxy-(9Z,11E)-octadecadienoate + glutathione disulfide + H2O. The enzyme catalyses (9S)-hydroperoxy-(10E,12Z)-octadecadienoate + 2 glutathione = (9S)-hydroxy-(10E,12Z)-octadecadienoate + glutathione disulfide + H2O. It carries out the reaction (5S)-hydroperoxy-(6E,8Z,11Z,14Z)-eicosatetraenoate + 2 glutathione = (5S)-hydroxy-(6E,8Z,11Z,14Z)-eicosatetraenoate + glutathione disulfide + H2O. The catalysed reaction is (12S)-hydroperoxy-(5Z,8Z,10E,14Z)-eicosatetraenoate + 2 glutathione = (12S)-hydroxy-(5Z,8Z,10E,14Z)-eicosatetraenoate + glutathione disulfide + H2O. It catalyses the reaction (12R)-hydroperoxy-(5Z,8Z,10E,14Z)-eicosatetraenoate + 2 glutathione = (12R)-hydroxy-(5Z,8Z,10E,14Z)-eicosatetraenoate + glutathione disulfide + H2O. The enzyme catalyses (15S)-hydroperoxy-(5Z,8Z,11Z,13E)-eicosatetraenoate + 2 glutathione = (15S)-hydroxy-(5Z,8Z,11Z,13E)-eicosatetraenoate + glutathione disulfide + H2O. It carries out the reaction (5S)-hydroperoxy-(6E,8Z,11Z,14Z,17Z)-eicosapentaenoate + 2 glutathione = (5S)-hydroxy-(6E,8Z,11Z,14Z,17Z)-eicosapentaenoate + glutathione disulfide + H2O. The catalysed reaction is (12S)-hydroperoxy-(5Z,8Z,10E,14Z,17Z)-eicosapentaenoate + 2 glutathione = (12S)-hydroxy-(5Z,8Z,10E,14Z,17Z)-eicosapentaenoate + glutathione disulfide + H2O. It catalyses the reaction (15S)-hydroperoxy-(5Z,8Z,11Z,13E,17Z)-eicosapentaenoate + 2 glutathione = (15S)-hydroxy-(5Z,8Z,11Z,13E,17Z)-eicosapentaenoate + glutathione disulfide + H2O. The enzyme catalyses (15S)-hydroperoxy-(11Z,13E)-eicosadienoate + 2 glutathione = (15S)-hydroxy-(11Z,13E)-eicosadienoate + glutathione disulfide + H2O. It carries out the reaction (17S)-hydroperoxy-(4Z,7Z,10Z,13Z,15E,19Z)-docosahexaenoate + 2 glutathione = (17S)-hydroxy-(4Z,7Z,10Z,13Z,15E,19Z)-docosahexaenoate + glutathione disulfide + H2O. Catalyzes the reduction of hydroperoxides in a glutathione-dependent manner thus regulating cellular redox homeostasis. Can reduce small soluble hydroperoxides such as H2O2, cumene hydroperoxide and tert-butyl hydroperoxide, as well as several fatty acid-derived hydroperoxides. In platelets catalyzes the reduction of 12-hydroperoxyeicosatetraenoic acid, the primary product of the arachidonate 12-lipoxygenase pathway. This is Glutathione peroxidase 1 (GPX1) from Pan troglodytes (Chimpanzee).